The sequence spans 426 residues: Glutamate-1-semialdehyde 2,1-aminomutase (426 aa).

Position 265 is an N6-(pyridoxal phosphate)lysine (Lys-265).

Belongs to the class-III pyridoxal-phosphate-dependent aminotransferase family. HemL subfamily. As to quaternary structure, homodimer. The cofactor is pyridoxal 5'-phosphate.

The protein resides in the cytoplasm. The catalysed reaction is (S)-4-amino-5-oxopentanoate = 5-aminolevulinate. It functions in the pathway porphyrin-containing compound metabolism; protoporphyrin-IX biosynthesis; 5-aminolevulinate from L-glutamyl-tRNA(Glu): step 2/2. This chain is Glutamate-1-semialdehyde 2,1-aminomutase, found in Pectobacterium atrosepticum (strain SCRI 1043 / ATCC BAA-672) (Erwinia carotovora subsp. atroseptica).